Here is a 326-residue protein sequence, read N- to C-terminus: tRNA uridine(34) hydroxylase (326 aa).

Residues 122 to 218 enclose the Rhodanese domain; sequence EENRCLVLDV…YGQAVGTGKW (97 aa). The active-site Cysteine persulfide intermediate is C178.

Belongs to the TrhO family.

The enzyme catalyses uridine(34) in tRNA + AH2 + O2 = 5-hydroxyuridine(34) in tRNA + A + H2O. In terms of biological role, catalyzes oxygen-dependent 5-hydroxyuridine (ho5U) modification at position 34 in tRNAs. The protein is tRNA uridine(34) hydroxylase of Chlamydia abortus (strain DSM 27085 / S26/3) (Chlamydophila abortus).